The following is a 612-amino-acid chain: Glutamine--fructose-6-phosphate aminotransferase [isomerizing] (612 aa).

The active-site Nucleophile; for GATase activity is the Cys-2. In terms of domain architecture, Glutamine amidotransferase type-2 spans 2-220 (CGIVGAIRAH…DGDIALLASD (219 aa)). SIS domains lie at 288-428 (AKSV…VRGL) and 461-602 (WAQQ…VDKP). Residue Lys-607 is the For Fru-6P isomerization activity of the active site.

Homodimer.

Its subcellular location is the cytoplasm. It carries out the reaction D-fructose 6-phosphate + L-glutamine = D-glucosamine 6-phosphate + L-glutamate. Functionally, catalyzes the first step in hexosamine metabolism, converting fructose-6P into glucosamine-6P using glutamine as a nitrogen source. In Neisseria meningitidis serogroup A / serotype 4A (strain DSM 15465 / Z2491), this protein is Glutamine--fructose-6-phosphate aminotransferase [isomerizing].